The primary structure comprises 66 residues: Putative inactive (E)-beta-ocimene synthase, chloroplastic (66 aa).

Residues 1–25 (MAAHNLCFNSAFVCNVHHQKTQHFP) constitute a chloroplast transit peptide.

This sequence belongs to the terpene synthase family. Tpsb subfamily. In terms of tissue distribution, expressed exclusively in flowers.

It localises to the plastid. Its subcellular location is the chloroplast. This is Putative inactive (E)-beta-ocimene synthase, chloroplastic (TPS02) from Arabidopsis thaliana (Mouse-ear cress).